The primary structure comprises 464 residues: UDP-glycosyltransferase 76F2 (464 aa).

UDP-alpha-D-glucose-binding positions include Ser-279, 338–340, 355–363, and 377–380; these read VNQ, HCGWNSTIE, and FSDQ.

It belongs to the UDP-glycosyltransferase family.

This is UDP-glycosyltransferase 76F2 (UGT76F2) from Arabidopsis thaliana (Mouse-ear cress).